Reading from the N-terminus, the 414-residue chain is Lipoyl synthase, mitochondrial (414 aa).

The transit peptide at 1-18 (MYRRSVGVLFVGRNTRWI) directs the protein to the mitochondrion. The span at 51-67 (GNSTEVENATSQLTGTS) shows a compositional bias: polar residues. The disordered stretch occupies residues 51-75 (GNSTEVENATSQLTGTSGKRRKGNR). [4Fe-4S] cluster is bound by residues cysteine 150, cysteine 155, cysteine 161, cysteine 181, cysteine 185, cysteine 188, and serine 396. Positions 164–385 (GKDKSKATAT…KERALEMGFL (222 aa)) constitute a Radical SAM core domain.

This sequence belongs to the radical SAM superfamily. Lipoyl synthase family. [4Fe-4S] cluster is required as a cofactor.

It localises to the mitochondrion. The enzyme catalyses [[Fe-S] cluster scaffold protein carrying a second [4Fe-4S](2+) cluster] + N(6)-octanoyl-L-lysyl-[protein] + 2 oxidized [2Fe-2S]-[ferredoxin] + 2 S-adenosyl-L-methionine + 4 H(+) = [[Fe-S] cluster scaffold protein] + N(6)-[(R)-dihydrolipoyl]-L-lysyl-[protein] + 4 Fe(3+) + 2 hydrogen sulfide + 2 5'-deoxyadenosine + 2 L-methionine + 2 reduced [2Fe-2S]-[ferredoxin]. It participates in protein modification; protein lipoylation via endogenous pathway; protein N(6)-(lipoyl)lysine from octanoyl-[acyl-carrier-protein]: step 2/2. Functionally, catalyzes the radical-mediated insertion of two sulfur atoms into the C-6 and C-8 positions of the octanoyl moiety bound to the lipoyl domains of lipoate-dependent enzymes, thereby converting the octanoylated domains into lipoylated derivatives. This is Lipoyl synthase, mitochondrial from Saccharomyces cerevisiae (strain RM11-1a) (Baker's yeast).